The following is a 463-amino-acid chain: Chromosomal replication initiator protein DnaA (463 aa).

Positions 1–83 (MSLTLWQQCL…LRFEVGSKPV (83 aa)) are domain I, interacts with DnaA modulators. Residues 83–126 (VAQAISQPVMVSAHASAPGVVSRPAPTRPSWDNVPALAELSYRS) form a domain II region. A domain III, AAA+ region region spans residues 127 to 343 (NVNTKHNFDN…GALNRVIANA (217 aa)). Residues Gly171, Gly173, Lys174, and Thr175 each coordinate ATP. The segment at 344 to 463 (NFTGRAITID…FSNLIRTLSS (120 aa)) is domain IV, binds dsDNA.

Belongs to the DnaA family. In terms of assembly, oligomerizes as a right-handed, spiral filament on DNA at oriC.

The protein localises to the cytoplasm. In terms of biological role, plays an essential role in the initiation and regulation of chromosomal replication. ATP-DnaA binds to the origin of replication (oriC) to initiate formation of the DNA replication initiation complex once per cell cycle. Binds the DnaA box (a 9 base pair repeat at the origin) and separates the double-stranded (ds)DNA. Forms a right-handed helical filament on oriC DNA; dsDNA binds to the exterior of the filament while single-stranded (ss)DNA is stabiized in the filament's interior. The ATP-DnaA-oriC complex binds and stabilizes one strand of the AT-rich DNA unwinding element (DUE), permitting loading of DNA polymerase. After initiation quickly degrades to an ADP-DnaA complex that is not apt for DNA replication. Binds acidic phospholipids. The polypeptide is Chromosomal replication initiator protein DnaA (Erwinia tasmaniensis (strain DSM 17950 / CFBP 7177 / CIP 109463 / NCPPB 4357 / Et1/99)).